Reading from the N-terminus, the 426-residue chain is Glutamyl-tRNA reductase (426 aa).

Residues 49 to 52 (TCNR), Ser109, 114 to 116 (EGQ), and Gln120 contribute to the substrate site. Cys50 serves as the catalytic Nucleophile. Residue 189-194 (GAGETG) participates in NADP(+) binding.

Belongs to the glutamyl-tRNA reductase family. In terms of assembly, homodimer.

The enzyme catalyses (S)-4-amino-5-oxopentanoate + tRNA(Glu) + NADP(+) = L-glutamyl-tRNA(Glu) + NADPH + H(+). The protein operates within porphyrin-containing compound metabolism; protoporphyrin-IX biosynthesis; 5-aminolevulinate from L-glutamyl-tRNA(Glu): step 1/2. It participates in porphyrin-containing compound metabolism; chlorophyll biosynthesis. Functionally, catalyzes the NADPH-dependent reduction of glutamyl-tRNA(Glu) to glutamate 1-semialdehyde (GSA). This is Glutamyl-tRNA reductase from Chlorobium phaeobacteroides (strain BS1).